The sequence spans 610 residues: Elongation factor 4 (610 aa).

In terms of domain architecture, tr-type G spans 12–194; it reads EKIRNFSIIA…QIVEKVPAPQ (183 aa). Residues 24–29 and 141–144 each bind GTP; these read DHGKST and NKID.

The protein belongs to the TRAFAC class translation factor GTPase superfamily. Classic translation factor GTPase family. LepA subfamily.

The protein resides in the cell membrane. It carries out the reaction GTP + H2O = GDP + phosphate + H(+). Required for accurate and efficient protein synthesis under certain stress conditions. May act as a fidelity factor of the translation reaction, by catalyzing a one-codon backward translocation of tRNAs on improperly translocated ribosomes. Back-translocation proceeds from a post-translocation (POST) complex to a pre-translocation (PRE) complex, thus giving elongation factor G a second chance to translocate the tRNAs correctly. Binds to ribosomes in a GTP-dependent manner. This is Elongation factor 4 from Streptococcus thermophilus (strain ATCC BAA-250 / LMG 18311).